The following is a 298-amino-acid chain: ATP synthase F(1) complex subunit gamma, mitochondrial (298 aa).

A mitochondrion-targeting transit peptide spans 1-25 (MFSRASVVGLSACAVQPQWIQVRNM). The residue at position 39 (Lys-39) is an N6-acetyllysine. Lys-49 carries the post-translational modification N6-succinyllysine. Position 55 is an N6-acetyllysine (Lys-55). Position 115 is an N6-acetyllysine; alternate (Lys-115). Position 115 is an N6-succinyllysine; alternate (Lys-115). Lys-138 carries the post-translational modification N6-acetyllysine. A Phosphoserine modification is found at Ser-146. The residue at position 154 (Lys-154) is an N6-acetyllysine; alternate. Lys-154 bears the N6-succinyllysine; alternate mark. Lys-197 carries the post-translational modification N6-acetyllysine. At Lys-270 the chain carries N6-succinyllysine.

It belongs to the ATPase gamma chain family. Component of the ATP synthase complex composed at least of ATP5F1A/subunit alpha, ATP5F1B/subunit beta, ATP5MC1/subunit c (homooctomer), MT-ATP6/subunit a, MT-ATP8/subunit 8, ATP5ME/subunit e, ATP5MF/subunit f, ATP5MG/subunit g, ATP5MK/subunit k, ATP5MJ/subunit j, ATP5F1C/subunit gamma, ATP5F1D/subunit delta, ATP5F1E/subunit epsilon, ATP5PF/subunit F6, ATP5PB/subunit b, ATP5PD/subunit d, ATP5PO/subunit OSCP. ATP synthase complex consists of a soluble F(1) head domain (subunits alpha(3) and beta(3)) - the catalytic core - and a membrane F(0) domain - the membrane proton channel (subunits c, a, 8, e, f, g, k and j). These two domains are linked by a central stalk (subunits gamma, delta, and epsilon) rotating inside the F1 region and a stationary peripheral stalk (subunits F6, b, d, and OSCP). Interacts with FLVCR2; this interaction occurs in the absence of heme and is disrupted upon heme binding.

The protein resides in the mitochondrion inner membrane. In terms of biological role, subunit gamma, of the mitochondrial membrane ATP synthase complex (F(1)F(0) ATP synthase or Complex V) that produces ATP from ADP in the presence of a proton gradient across the membrane which is generated by electron transport complexes of the respiratory chain. ATP synthase complex consist of a soluble F(1) head domain - the catalytic core - and a membrane F(1) domain - the membrane proton channel. These two domains are linked by a central stalk rotating inside the F(1) region and a stationary peripheral stalk. During catalysis, ATP synthesis in the catalytic domain of F(1) is coupled via a rotary mechanism of the central stalk subunits to proton translocation. In vivo, can only synthesize ATP although its ATP hydrolase activity can be activated artificially in vitro. With the central stalk subunit delta, is essential for the biogenesis of F(1) catalytic part of the ATP synthase complex namely in the formation of F1 assembly intermediate. This chain is ATP synthase F(1) complex subunit gamma, mitochondrial, found in Mus musculus (Mouse).